We begin with the raw amino-acid sequence, 143 residues long: Succinate dehydrogenase assembly factor 2, mitochondrial (143 aa).

The protein belongs to the SDHAF2 family. As to quaternary structure, interacts with the flavoprotein subunit within the SDH catalytic dimer.

It localises to the mitochondrion matrix. Plays an essential role in the assembly of succinate dehydrogenase (SDH), an enzyme complex (also referred to as respiratory complex II) that is a component of both the tricarboxylic acid (TCA) cycle and the mitochondrial electron transport chain, and which couples the oxidation of succinate to fumarate with the reduction of ubiquinone (coenzyme Q) to ubiquinol. Required for flavinylation (covalent attachment of FAD) of the flavoprotein subunit of the SDH catalytic dimer. In Schizosaccharomyces japonicus (strain yFS275 / FY16936) (Fission yeast), this protein is Succinate dehydrogenase assembly factor 2, mitochondrial.